We begin with the raw amino-acid sequence, 128 residues long: MKRREAREKALQALFQIELNEMSLDQAIKNIMEDEQDDYMEKLVEGVMANKAEIDAIIEPNLDNWRMDRLSKVDLSLLRLSVYEIKYLDDVPNRVSLNESIEIAKIYSDEKSSKFINGVLANIAPEDK.

This sequence belongs to the NusB family.

In terms of biological role, involved in transcription antitermination. Required for transcription of ribosomal RNA (rRNA) genes. Binds specifically to the boxA antiterminator sequence of the ribosomal RNA (rrn) operons. This is Transcription antitermination protein NusB from Listeria monocytogenes serotype 4b (strain CLIP80459).